The sequence spans 125 residues: Small ribosomal subunit protein uS13 (125 aa).

A disordered region spans residues 92–125; that stretch reads RRSLPVRGQNTQTNARTRKGKRKTVAGKKKAARK. Over residues 107-125 the composition is skewed to basic residues; sequence RTRKGKRKTVAGKKKAARK.

It belongs to the universal ribosomal protein uS13 family. Part of the 30S ribosomal subunit. Forms a loose heterodimer with protein S19. Forms two bridges to the 50S subunit in the 70S ribosome.

In terms of biological role, located at the top of the head of the 30S subunit, it contacts several helices of the 16S rRNA. In the 70S ribosome it contacts the 23S rRNA (bridge B1a) and protein L5 of the 50S subunit (bridge B1b), connecting the 2 subunits; these bridges are implicated in subunit movement. Contacts the tRNAs in the A and P-sites. This Chlorobium luteolum (strain DSM 273 / BCRC 81028 / 2530) (Pelodictyon luteolum) protein is Small ribosomal subunit protein uS13.